The primary structure comprises 148 residues: Urease accessory protein UreE (148 aa).

This sequence belongs to the UreE family.

It localises to the cytoplasm. Its function is as follows. Involved in urease metallocenter assembly. Binds nickel. Probably functions as a nickel donor during metallocenter assembly. The protein is Urease accessory protein UreE of Nostoc punctiforme (strain ATCC 29133 / PCC 73102).